A 260-amino-acid polypeptide reads, in one-letter code: Kallikrein-8 (260 aa).

Residues 1 to 28 form the signal peptide; it reads MGRPRPRAAKTWMFLLLLGGAWAGHSRA. Positions 29–32 are excised as a propeptide; it reads QEDK. The Peptidase S1 domain maps to 33 to 257; it reads VLGGHECQPH…YLDWIKKIIG (225 aa). 6 disulfides stabilise this stretch: Cys-39–Cys-173, Cys-58–Cys-74, Cys-145–Cys-246, Cys-152–Cys-218, Cys-184–Cys-198, and Cys-208–Cys-233. His-73 (charge relay system) is an active-site residue. Asn-110 carries an N-linked (GlcNAc...) asparagine glycan. Asp-120 functions as the Charge relay system in the catalytic mechanism. Ser-212 serves as the catalytic Charge relay system.

Belongs to the peptidase S1 family. Kallikrein subfamily. Interacts with SPINK9. As to expression, isoform 1 is predominantly expressed in the pancreas. Isoform 2 is expressed in adult brain and hippocampus. Isoform 1 and isoform 2 are found in fetal brain and placenta. Detected in salivary gland, uterus, thymus, breast, testis and kidney but not in spleen, liver, lung or normal ovarian tissue. Displays an 11.5-fold increase in Alzheimer disease hippocampus compared to controls and is overexpressed in some ovarian carcinomas. Expressed at low levels in normal skin while high levels are found in psoriasis vulgaris, seborrheic keratosis, lichen planus and squamous cell carcinoma skin samples. Expressed in the keratinocytes.

It is found in the secreted. Its subcellular location is the cytoplasm. It catalyses the reaction Cleavage of amide substrates following the basic amino acids Arg or Lys at the P1 position, with a preference for Arg over Lys.. Its activity is regulated as follows. Inhibited by a range of serine protease inhibitors including antipain, aprotinin, leupeptin, benzamidine and soybean trypsin inhibitor. Its function is as follows. Serine protease which is capable of degrading a number of proteins such as casein, fibrinogen, kininogen, fibronectin and collagen type IV. Also cleaves L1CAM in response to increased neural activity. Induces neurite outgrowth and fasciculation of cultured hippocampal neurons. Plays a role in the formation and maturation of orphan and small synaptic boutons in the Schaffer-collateral pathway, regulates Schaffer-collateral long-term potentiation in the hippocampus and is required for memory acquisition and synaptic plasticity. Involved in skin desquamation and keratinocyte proliferation. Plays a role in the secondary phase of pathogenesis following spinal cord injury. This chain is Kallikrein-8 (KLK8), found in Homo sapiens (Human).